Reading from the N-terminus, the 394-residue chain is Phosphoglycerate kinase (394 aa).

Substrate-binding positions include 21-23, arginine 36, 59-62, arginine 118, and arginine 151; these read DFN and HLGR. Residue serine 183 is modified to Phosphoserine. 2 residues coordinate ATP: lysine 201 and glycine 292. Threonine 299 is subject to Phosphothreonine. Residues glutamate 323 and 350–353 contribute to the ATP site; that span reads GGDS.

Belongs to the phosphoglycerate kinase family. As to quaternary structure, monomer.

The protein localises to the cytoplasm. The catalysed reaction is (2R)-3-phosphoglycerate + ATP = (2R)-3-phospho-glyceroyl phosphate + ADP. It participates in carbohydrate degradation; glycolysis; pyruvate from D-glyceraldehyde 3-phosphate: step 2/5. This is Phosphoglycerate kinase from Bacillus cereus (strain B4264).